A 202-amino-acid polypeptide reads, in one-letter code: ATP-dependent Clp protease proteolytic subunit (202 aa).

Ser106 (nucleophile) is an active-site residue. His131 is a catalytic residue.

The protein belongs to the peptidase S14 family. Fourteen ClpP subunits assemble into 2 heptameric rings which stack back to back to give a disk-like structure with a central cavity, resembling the structure of eukaryotic proteasomes.

The protein localises to the cytoplasm. It carries out the reaction Hydrolysis of proteins to small peptides in the presence of ATP and magnesium. alpha-casein is the usual test substrate. In the absence of ATP, only oligopeptides shorter than five residues are hydrolyzed (such as succinyl-Leu-Tyr-|-NHMec, and Leu-Tyr-Leu-|-Tyr-Trp, in which cleavage of the -Tyr-|-Leu- and -Tyr-|-Trp bonds also occurs).. Cleaves peptides in various proteins in a process that requires ATP hydrolysis. Has a chymotrypsin-like activity. Plays a major role in the degradation of misfolded proteins. This chain is ATP-dependent Clp protease proteolytic subunit, found in Acidovorax sp. (strain JS42).